A 508-amino-acid polypeptide reads, in one-letter code: Photosystem II CP47 reaction center protein (508 aa).

6 consecutive transmembrane segments (helical) span residues 21 to 36, 101 to 115, 140 to 156, 203 to 218, 237 to 252, and 457 to 472; these read SVHIMHTALVAGWAGS, IAFSGLCFLAAIWHW, GIHLFLSGVACFGFGAF, IAAGTLGILAGLFHLS, VLSSSIAAVFFAAFVV, and SFALLFFFGHIWHGAR.

This sequence belongs to the PsbB/PsbC family. PsbB subfamily. In terms of assembly, PSII is composed of 1 copy each of membrane proteins PsbA, PsbB, PsbC, PsbD, PsbE, PsbF, PsbH, PsbI, PsbJ, PsbK, PsbL, PsbM, PsbT, PsbX, PsbY, PsbZ, Psb30/Ycf12, at least 3 peripheral proteins of the oxygen-evolving complex and a large number of cofactors. It forms dimeric complexes. Binds multiple chlorophylls. PSII binds additional chlorophylls, carotenoids and specific lipids. serves as cofactor.

Its subcellular location is the plastid membrane. One of the components of the core complex of photosystem II (PSII). It binds chlorophyll and helps catalyze the primary light-induced photochemical processes of PSII. PSII is a light-driven water:plastoquinone oxidoreductase, using light energy to abstract electrons from H(2)O, generating O(2) and a proton gradient subsequently used for ATP formation. In Cuscuta reflexa (Southern Asian dodder), this protein is Photosystem II CP47 reaction center protein.